The primary structure comprises 197 residues: HTH-type transcriptional regulator BetI (197 aa).

An HTH tetR-type domain is found at 8-68 (PIRRQQLIEA…ATMRYLMSVL (61 aa)). Residues 31-50 (SIALIARLAGVSNGIISHYF) constitute a DNA-binding region (H-T-H motif).

The protein operates within amine and polyamine biosynthesis; betaine biosynthesis via choline pathway [regulation]. Functionally, repressor involved in the biosynthesis of the osmoprotectant glycine betaine. It represses transcription of the choline transporter BetT and the genes of BetAB involved in the synthesis of glycine betaine. The protein is HTH-type transcriptional regulator BetI of Pseudomonas fluorescens (strain Pf0-1).